The chain runs to 241 residues: Uridylate kinase (241 aa).

12 to 15 (KLSG) provides a ligand contact to ATP. Positions 20-25 (GDKGVG) are involved in allosteric activation by GTP. Residue Gly-54 coordinates UMP. ATP is bound by residues Gly-55 and Arg-59. Residues Asp-74 and 135–142 (IGSPYFST) each bind UMP. Asn-163, Tyr-169, and Asp-172 together coordinate ATP.

It belongs to the UMP kinase family. In terms of assembly, homohexamer.

It is found in the cytoplasm. It carries out the reaction UMP + ATP = UDP + ADP. It participates in pyrimidine metabolism; CTP biosynthesis via de novo pathway; UDP from UMP (UMPK route): step 1/1. With respect to regulation, allosterically activated by GTP. Inhibited by UTP. Catalyzes the reversible phosphorylation of UMP to UDP. The chain is Uridylate kinase from Streptococcus gordonii (strain Challis / ATCC 35105 / BCRC 15272 / CH1 / DL1 / V288).